Consider the following 84-residue polypeptide: Cytochrome b559 subunit alpha (84 aa).

The chain crosses the membrane as a helical span at residues 24-38 (IIHAVTLPAIFIAGF). Position 26 (His-26) interacts with heme.

The protein belongs to the PsbE/PsbF family. In terms of assembly, heterodimer of an alpha subunit and a beta subunit. PSII is composed of 1 copy each of membrane proteins PsbA, PsbB, PsbC, PsbD, PsbE, PsbF, PsbH, PsbI, PsbJ, PsbK, PsbL, PsbM, PsbT, PsbX, PsbY, Psb30/Ycf12, peripheral proteins PsbO, CyanoQ (PsbQ), PsbU, PsbV and a large number of cofactors. It forms dimeric complexes. Heme b is required as a cofactor.

Its subcellular location is the cellular thylakoid membrane. Its function is as follows. This b-type cytochrome is tightly associated with the reaction center of photosystem II (PSII). PSII is a light-driven water:plastoquinone oxidoreductase that uses light energy to abstract electrons from H(2)O, generating O(2) and a proton gradient subsequently used for ATP formation. It consists of a core antenna complex that captures photons, and an electron transfer chain that converts photonic excitation into a charge separation. The protein is Cytochrome b559 subunit alpha of Prochlorococcus marinus (strain MIT 9301).